Reading from the N-terminus, the 723-residue chain is MPWWPWRRWRRWRRRRGNWRRRVAPRRYRRTARRARRRRKAVRRRRRRRVRRRGYYRRYRRRRRYKRRLLILKQWQPTTNLRLTVKGLIPVVVMGKGKTQNNFGQWEQTVPLEGESYGGSFTIRKFTLQTLYEDYLKLRNRWSRSNTDLELIRYTGLNLRLYRHEFSDYIVHYSLETPMEVGLESHMLAHPLKMIMSSKHVTVPSLLTKKGGRRYLRLKIPPPKLMMTQWYFQKEFCQVGLVLLSISTATLMHPWMAPFVNSPALTIYAVNHKTYSDMSILPSNNQGSTKNELIETLYTAEHTYNPMAQRIWGNIKPQNTNFTPENYWNKWNEIHTKIKTNRQSELTQLKQMRKRLELTTENDYQDPNFGLSYGLYSPLLLYPEMYFPEQSKVYQKARYNPLLDQGIGNVVWTEPLTKKTCDYASQAYNVIKDAPLYLALFGYIDICSKLAKDKSFYLSNRVCVKCPYTVPQLLSKTNATLGHVILSENFMRGLVPSKDSYVPLYMRGKWYPSIYHQEEVIEAIVSSGPFVPRDQITKSLDITIGCRFGFRIGGNLLNPKQVGDPCKQPTHPLPAPGGGDLLRAVQVSDPRKVGIQFHPWDLRRGMLSTSSIKRMLQDSDDDESIEFPPKAWPGDPVPVGRTLEERCSSSLYHLLQEQATPPPFKKPRTEDQEENPEETTQLQLFQELQRQRELQLQLKRGFRGLVEEMIKSHRHLALDPYLK.

Residues Q658–T679 are disordered.

It belongs to the anelloviridae capsid protein family.

It localises to the virion. Its function is as follows. Self assemble to form an icosahedral capsid. In Torque teno virus (isolate Japanese macaque/Japan/Mf-TTV9/2000) (TTV), this protein is Capsid protein.